We begin with the raw amino-acid sequence, 359 residues long: Nicotinate-nucleotide--dimethylbenzimidazole phosphoribosyltransferase (359 aa).

Catalysis depends on glutamate 318, which acts as the Proton acceptor.

This sequence belongs to the CobT family. As to quaternary structure, homodimer.

It catalyses the reaction 5,6-dimethylbenzimidazole + nicotinate beta-D-ribonucleotide = alpha-ribazole 5'-phosphate + nicotinate + H(+). It functions in the pathway nucleoside biosynthesis; alpha-ribazole biosynthesis; alpha-ribazole from 5,6-dimethylbenzimidazole: step 1/2. Catalyzes the synthesis of alpha-ribazole-5'-phosphate from nicotinate mononucleotide (NAMN) and 5,6-dimethylbenzimidazole (DMB). The sequence is that of Nicotinate-nucleotide--dimethylbenzimidazole phosphoribosyltransferase from Escherichia coli O17:K52:H18 (strain UMN026 / ExPEC).